Consider the following 277-residue polypeptide: Urease accessory protein UreD (277 aa).

It belongs to the UreD family. In terms of assembly, ureD, UreF and UreG form a complex that acts as a GTP-hydrolysis-dependent molecular chaperone, activating the urease apoprotein by helping to assemble the nickel containing metallocenter of UreC. The UreE protein probably delivers the nickel.

Its subcellular location is the cytoplasm. Its function is as follows. Required for maturation of urease via the functional incorporation of the urease nickel metallocenter. The protein is Urease accessory protein UreD of Rhodopseudomonas palustris (strain BisB18).